Reading from the N-terminus, the 361-residue chain is Phosphoserine aminotransferase (361 aa).

Residues S9 and R42 each contribute to the L-glutamate site. Residues 76–77 (AR), W102, T153, D173, and Q196 contribute to the pyridoxal 5'-phosphate site. The residue at position 197 (K197) is an N6-(pyridoxal phosphate)lysine. A pyridoxal 5'-phosphate-binding site is contributed by 238–239 (NT).

Belongs to the class-V pyridoxal-phosphate-dependent aminotransferase family. SerC subfamily. As to quaternary structure, homodimer. The cofactor is pyridoxal 5'-phosphate.

The protein localises to the cytoplasm. The enzyme catalyses O-phospho-L-serine + 2-oxoglutarate = 3-phosphooxypyruvate + L-glutamate. It catalyses the reaction 4-(phosphooxy)-L-threonine + 2-oxoglutarate = (R)-3-hydroxy-2-oxo-4-phosphooxybutanoate + L-glutamate. Its pathway is amino-acid biosynthesis; L-serine biosynthesis; L-serine from 3-phospho-D-glycerate: step 2/3. The protein operates within cofactor biosynthesis; pyridoxine 5'-phosphate biosynthesis; pyridoxine 5'-phosphate from D-erythrose 4-phosphate: step 3/5. Catalyzes the reversible conversion of 3-phosphohydroxypyruvate to phosphoserine and of 3-hydroxy-2-oxo-4-phosphonooxybutanoate to phosphohydroxythreonine. This Sodalis glossinidius (strain morsitans) protein is Phosphoserine aminotransferase.